The primary structure comprises 118 residues: REPTOR-binding partner (118 aa).

Residues 1-20 are compositionally biased toward polar residues; that stretch reads MADMEIQSNKMSITEETQVQ. Residues 1-53 are disordered; that stretch reads MADMEIQSNKMSITEETQVQTRKECGKRGRKPGRKTSTEKLDMKAKLERSRQS. Positions 36 to 53 are enriched in basic and acidic residues; the sequence is TSTEKLDMKAKLERSRQS. The interval 40–77 is basic motif; that stretch reads KLDMKAKLERSRQSARECRARKKLRYQYLEELVADREK. Residues 40–90 enclose the bZIP domain; sequence KLDMKAKLERSRQSARECRARKKLRYQYLEELVADREKAVVALRTELERLI. Residues 82-89 are leucine-zipper; that stretch reads LRTELERL.

Belongs to the bZIP family. ATF subfamily. In terms of assembly, homodimer. Interacts (via C-terminus) with REPTOR (via C-terminus).

The protein resides in the nucleus. It is found in the chromosome. In terms of biological role, transcriptional regulator that acts in the TORC1 signaling pathway to regulate energy homeostasis and promote survival during nutrient deprivation. Interacts with REPTOR to form a transcriptional activator complex that functions downstream of TORC1 to up-regulate the expression of most target genes induced by TORC1 inhibition. In the complex, acts to enhance the binding of the transcriptional activator REPTOR to the regulatory sequences of target genes. Under normal conditions TORC1 is active, inhibiting the formation of the REPTOR/REPTOR-BP complex by phosphorylating REPTOR and mediates its cytoplasmic retention by forming a docking site for 14-3-3 proteins. Upon TORC1 inhibition resulting from nutrient stress, REPTOR is recruited into the nucleus where it interacts with REPTOR-BP and together they maintain organismal metabolism by activating the expression of target stress response genes including those involved in glycogenesis and triglyceride biosynthesis. The complex also appears to negatively regulate some aspects of TORC1-dependent larval growth. In Drosophila melanogaster (Fruit fly), this protein is REPTOR-binding partner.